Consider the following 407-residue polypeptide: Aminomethyltransferase, mitochondrial (407 aa).

The N-terminal 29 residues, 1 to 29, are a transit peptide targeting the mitochondrion; the sequence is MRGGLWQVGQSITRRLGQSDKKTIVRRWY. 3 residues coordinate substrate: Glu-234, Arg-265, and Tyr-403.

The protein belongs to the GcvT family. The glycine cleavage system is composed of four proteins: P, T, L and H.

Its subcellular location is the mitochondrion. The enzyme catalyses N(6)-[(R)-S(8)-aminomethyldihydrolipoyl]-L-lysyl-[protein] + (6S)-5,6,7,8-tetrahydrofolate = N(6)-[(R)-dihydrolipoyl]-L-lysyl-[protein] + (6R)-5,10-methylene-5,6,7,8-tetrahydrofolate + NH4(+). Functionally, the glycine cleavage system catalyzes the degradation of glycine. In Flaveria trinervia (Clustered yellowtops), this protein is Aminomethyltransferase, mitochondrial (GDCST).